A 101-amino-acid chain; its full sequence is Protein RnfH (101 aa).

It belongs to the UPF0125 (RnfH) family.

The polypeptide is Protein RnfH (Pseudomonas aeruginosa (strain UCBPP-PA14)).